The sequence spans 436 residues: tRNA-2-methylthio-N(6)-dimethylallyladenosine synthase (436 aa).

An MTTase N-terminal domain is found at 5–120 (KKLFIQTLGC…IKDVVDVKGA (116 aa)). [4Fe-4S] cluster is bound by residues Cys-14, Cys-51, Cys-83, Cys-152, Cys-156, and Cys-159. Positions 138–372 (KTNKYRASVN…IELHKRYLEE (235 aa)) constitute a Radical SAM core domain. The TRAM domain occupies 375–436 (PKLIGETLNI…RTSLKGEVVN (62 aa)).

This sequence belongs to the methylthiotransferase family. MiaB subfamily. Monomer. Requires [4Fe-4S] cluster as cofactor.

The protein localises to the cytoplasm. The catalysed reaction is N(6)-dimethylallyladenosine(37) in tRNA + (sulfur carrier)-SH + AH2 + 2 S-adenosyl-L-methionine = 2-methylsulfanyl-N(6)-dimethylallyladenosine(37) in tRNA + (sulfur carrier)-H + 5'-deoxyadenosine + L-methionine + A + S-adenosyl-L-homocysteine + 2 H(+). Catalyzes the methylthiolation of N6-(dimethylallyl)adenosine (i(6)A), leading to the formation of 2-methylthio-N6-(dimethylallyl)adenosine (ms(2)i(6)A) at position 37 in tRNAs that read codons beginning with uridine. This Aliarcobacter butzleri (strain RM4018) (Arcobacter butzleri) protein is tRNA-2-methylthio-N(6)-dimethylallyladenosine synthase.